A 243-amino-acid polypeptide reads, in one-letter code: uncharacterized protein (243 aa).

In terms of domain architecture, VWFA spans 26 to 204 (RVGLVLDITG…ISDDELYDAL (179 aa)). A disordered region spans residues 222 to 243 (REQEPPAEKPKKKGFFSRLFSK). The span at 231–243 (PKKKGFFSRLFSK) shows a compositional bias: basic residues.

This is an uncharacterized protein from Bacillus subtilis (strain 168).